Here is a 367-residue protein sequence, read N- to C-terminus: Aminomethyltransferase (367 aa).

This sequence belongs to the GcvT family. The glycine cleavage system is composed of four proteins: P, T, L and H.

The catalysed reaction is N(6)-[(R)-S(8)-aminomethyldihydrolipoyl]-L-lysyl-[protein] + (6S)-5,6,7,8-tetrahydrofolate = N(6)-[(R)-dihydrolipoyl]-L-lysyl-[protein] + (6R)-5,10-methylene-5,6,7,8-tetrahydrofolate + NH4(+). Its function is as follows. The glycine cleavage system catalyzes the degradation of glycine. The polypeptide is Aminomethyltransferase (Mycobacterium leprae (strain Br4923)).